Reading from the N-terminus, the 302-residue chain is Uricase (302 aa).

S2 carries the N-acetylserine modification. Residues K11 and T58 each act as charge relay system in the active site. The 5-hydroxyisourate site is built by T58, D59, F160, R177, V228, Q229, and N255. Residue T58 participates in O2 binding. Residues T58, D59, F160, R177, V228, Q229, and N255 each coordinate urate. Residue N255 coordinates O2. H257 (charge relay system) is an active-site residue. The Microbody targeting signal motif lies at 300-302 (SKL).

The protein belongs to the uricase family. Homotetramer.

Its subcellular location is the peroxisome. The catalysed reaction is urate + O2 + H2O = 5-hydroxyisourate + H2O2. It participates in purine metabolism; urate degradation; (S)-allantoin from urate: step 1/3. 8-Azaxanthine is one of the most potent competitive inhibitors of uricase activity. Hypoxanthine has only a small inhibitor effect, and caffeine has no effect at all. Azide not only competes with dioxygen but also competes with the substrate for its enzymatic site. Urate oxidase is a cofactorless enzyme involved in the metabolism of purines. Catalyzes, in the presence of molecular oxygen, the hydroxylation of uric acid to metastable 5-hydroxyisourate (5-HIU) which is further degraded to allantoin. This Aspergillus flavus protein is Uricase.